Reading from the N-terminus, the 957-residue chain is Glycine dehydrogenase (decarboxylating) (957 aa).

Lys-704 is modified (N6-(pyridoxal phosphate)lysine).

It belongs to the GcvP family. The glycine cleavage system is composed of four proteins: P, T, L and H. Pyridoxal 5'-phosphate is required as a cofactor.

The catalysed reaction is N(6)-[(R)-lipoyl]-L-lysyl-[glycine-cleavage complex H protein] + glycine + H(+) = N(6)-[(R)-S(8)-aminomethyldihydrolipoyl]-L-lysyl-[glycine-cleavage complex H protein] + CO2. In terms of biological role, the glycine cleavage system catalyzes the degradation of glycine. The P protein binds the alpha-amino group of glycine through its pyridoxal phosphate cofactor; CO(2) is released and the remaining methylamine moiety is then transferred to the lipoamide cofactor of the H protein. This Bordetella petrii (strain ATCC BAA-461 / DSM 12804 / CCUG 43448) protein is Glycine dehydrogenase (decarboxylating).